The primary structure comprises 232 residues: Large ribosomal subunit protein uL1 (232 aa).

The protein belongs to the universal ribosomal protein uL1 family. In terms of assembly, part of the 50S ribosomal subunit.

Functionally, binds directly to 23S rRNA. The L1 stalk is quite mobile in the ribosome, and is involved in E site tRNA release. In terms of biological role, protein L1 is also a translational repressor protein, it controls the translation of the L11 operon by binding to its mRNA. The protein is Large ribosomal subunit protein uL1 of Chelativorans sp. (strain BNC1).